The following is a 333-amino-acid chain: DNA-directed RNA polymerase subunit alpha (333 aa).

The segment at 1–239 (MSAVLDKGSL…TQARCFLNIA (239 aa)) is alpha N-terminal domain (alpha-NTD). The alpha C-terminal domain (alpha-CTD) stretch occupies residues 259–333 (DASDLLSARI…SLGMNLDSHG (75 aa)).

This sequence belongs to the RNA polymerase alpha chain family. In terms of assembly, homodimer. The RNAP catalytic core consists of 2 alpha, 1 beta, 1 beta' and 1 omega subunit. When a sigma factor is associated with the core the holoenzyme is formed, which can initiate transcription.

The catalysed reaction is RNA(n) + a ribonucleoside 5'-triphosphate = RNA(n+1) + diphosphate. Functionally, DNA-dependent RNA polymerase catalyzes the transcription of DNA into RNA using the four ribonucleoside triphosphates as substrates. This chain is DNA-directed RNA polymerase subunit alpha, found in Neorickettsia sennetsu (strain ATCC VR-367 / Miyayama) (Ehrlichia sennetsu).